Here is a 255-residue protein sequence, read N- to C-terminus: Ribonuclease HII (255 aa).

One can recognise an RNase H type-2 domain in the interval 72 to 255 (RLIAGVDEAG…KTFAPVQSYC (184 aa)). A divalent metal cation contacts are provided by Asp78, Glu79, and Asp170.

The protein belongs to the RNase HII family. Requires Mn(2+) as cofactor. It depends on Mg(2+) as a cofactor.

It is found in the cytoplasm. The enzyme catalyses Endonucleolytic cleavage to 5'-phosphomonoester.. In terms of biological role, endonuclease that specifically degrades the RNA of RNA-DNA hybrids. The protein is Ribonuclease HII of Bacillus velezensis (strain DSM 23117 / BGSC 10A6 / LMG 26770 / FZB42) (Bacillus amyloliquefaciens subsp. plantarum).